Here is a 60-residue protein sequence, read N- to C-terminus: UPF0434 protein Daci_3569 (60 aa).

The protein belongs to the UPF0434 family.

This Delftia acidovorans (strain DSM 14801 / SPH-1) protein is UPF0434 protein Daci_3569.